The following is a 948-amino-acid chain: PHD finger protein 14 (948 aa).

The interval 22–302 is disordered; the sequence is DYDSSDDSDF…LSQSKSNEDS (281 aa). Phosphoserine is present on residues S26 and S29. The span at 36–47 shows a compositional bias: low complexity; the sequence is ASDSEGSGNGSE. Over residues 60–71 the composition is skewed to acidic residues; that stretch reads DSEENILEEELN. Basic and acidic residues predominate over residues 72–85; the sequence is EDIKVKEEQLKNSA. A phosphoserine mark is found at S84 and S91. 2 stretches are compositionally biased toward basic and acidic residues: residues 95–110 and 117–139; these read QLIKMEKKEEEENGER and KEKEKEKEKEKEKEREKEKEKAT. Over residues 140–174 the composition is skewed to low complexity; that stretch reads VSENVAASAAATTPATSPPAVNTSPSVPTTTTATE. S196 is subject to Phosphoserine. Composition is skewed to acidic residues over residues 199–212 and 233–256; these read ELNDMDDYDSEDDN and DGDNEDDEDEGSGSDEDENDEGND. The residue at position 206 (Y206) is a Phosphotyrosine. S208 bears the Phosphoserine mark. At T287 the chain carries Phosphothreonine. Polar residues predominate over residues 288–297; that stretch reads NDSLTLSQSK. 5 positions are modified to phosphoserine: S290, S294, S298, S302, and S308. The PHD-type 1 zinc finger occupies 319–380; it reads ILICCVCLGD…PWFCDACKCG (62 aa). Positions 322, 325, 339, 342, 347, and 350 each coordinate Zn(2+). Phosphoserine is present on S359. Residues C374, C377, C385, C388, H405, C408, C441, C444, C458, C463, H468, C471, C495, and H498 each contribute to the Zn(2+) site. The C2HC pre-PHD-type zinc-finger motif lies at 382-415; sequence SPSCELCPNQDGIFKETDAGRWVHIVCALYVPGV. Residues 439-499 form a PHD-type 2 zinc finger; the sequence is KECSFCEDPR…PFFAYCKQHA (61 aa). S530 carries the phosphoserine modification. Residues 630–678 are a coiled coil; sequence MIQIQENMAEQKNIKDKLENEQEKLHVEYNKLCESLEELQNLNGKLRSE. E648 participates in a covalent cross-link: Glycyl lysine isopeptide (Lys-Gly) (interchain with G-Cter in SUMO2). Q651 bears the Phosphoserine mark. A PHD-type 3 zinc finger spans residues 725-779; sequence LYSCGICKKNHDQHLLLLCDTCKLHYHLGCLDPPLTRMPRKTKNSYWQCSECDQA. 8 residues coordinate Zn(2+): C728, C731, C743, C746, H751, C754, C773, and C776. Residues S781, S782, and S835 each carry the phosphoserine modification. A disordered region spans residues 811-862; that stretch reads VPQDVPPEPKKIPIRNTRTRGRKRSFVPEEEKHEERVPRERRQRQSVLQKKP. The span at 836 to 850 shows a compositional bias: basic and acidic residues; it reads FVPEEEKHEERVPRE. A PHD-type 4 zinc finger spans residues 868–921; the sequence is RTECATCKGTGDNENLVRCDECRLCYHFGCLDPPLKKSPKQTGYGWICQECDSS. C871, C874, C886, C889, H894, C897, C915, and C918 together coordinate Zn(2+). The segment at 920 to 948 is disordered; the sequence is SSSSKEDENEAERKNISQELNMEQKNPKK. A compositionally biased stretch (basic and acidic residues) spans 922-935; the sequence is SSKEDENEAERKNI. The segment covering 936–948 has biased composition (polar residues); the sequence is SQELNMEQKNPKK.

The protein localises to the nucleus. Its subcellular location is the chromosome. It is found in the cytoplasm. Histone-binding protein. Binds preferentially to unmodified histone H3 but can also bind to a lesser extent to histone H3 trimethylated at 'Lys-9' (H3K9me3) as well as to histone H3 monomethylated at 'Lys-27' (H3K27ac) and trimethylated at 'Lys-27' (H3K27me3). Represses PDGFRA expression, thus playing a role in regulation of mesenchymal cell proliferation. Suppresses the expression of CDKN1A/p21 by reducing the level of trimethylation of histone H3 'Lys-4', leading to enhanced proliferation of germinal center B cells. The protein is PHD finger protein 14 (PHF14) of Homo sapiens (Human).